The primary structure comprises 467 residues: Uronate isomerase (467 aa).

Belongs to the metallo-dependent hydrolases superfamily. Uronate isomerase family.

It carries out the reaction D-glucuronate = D-fructuronate. The enzyme catalyses aldehydo-D-galacturonate = keto-D-tagaturonate. The protein operates within carbohydrate metabolism; pentose and glucuronate interconversion. This is Uronate isomerase from Staphylococcus haemolyticus (strain JCSC1435).